Reading from the N-terminus, the 121-residue chain is Ribosome-binding factor A (121 aa).

This sequence belongs to the RbfA family. As to quaternary structure, monomer. Binds 30S ribosomal subunits, but not 50S ribosomal subunits or 70S ribosomes.

The protein resides in the cytoplasm. In terms of biological role, one of several proteins that assist in the late maturation steps of the functional core of the 30S ribosomal subunit. Associates with free 30S ribosomal subunits (but not with 30S subunits that are part of 70S ribosomes or polysomes). Required for efficient processing of 16S rRNA. May interact with the 5'-terminal helix region of 16S rRNA. This Brevibacillus brevis (strain 47 / JCM 6285 / NBRC 100599) protein is Ribosome-binding factor A.